Consider the following 366-residue polypeptide: Chorismate synthase (366 aa).

NADP(+)-binding residues include arginine 48 and arginine 54. FMN is bound by residues 125–127, 238–239, glycine 278, 293–297, and arginine 319; these read RSS, NA, and KPTSS.

The protein belongs to the chorismate synthase family. Homotetramer. Requires FMNH2 as cofactor.

It carries out the reaction 5-O-(1-carboxyvinyl)-3-phosphoshikimate = chorismate + phosphate. It functions in the pathway metabolic intermediate biosynthesis; chorismate biosynthesis; chorismate from D-erythrose 4-phosphate and phosphoenolpyruvate: step 7/7. Catalyzes the anti-1,4-elimination of the C-3 phosphate and the C-6 proR hydrogen from 5-enolpyruvylshikimate-3-phosphate (EPSP) to yield chorismate, which is the branch point compound that serves as the starting substrate for the three terminal pathways of aromatic amino acid biosynthesis. This reaction introduces a second double bond into the aromatic ring system. The sequence is that of Chorismate synthase from Burkholderia vietnamiensis (strain G4 / LMG 22486) (Burkholderia cepacia (strain R1808)).